Reading from the N-terminus, the 159-residue chain is MVDPARARKLAKRIGTIVATAIDHEIKDPRLAFVTITDTKVTNDLHDATVYYTVMGEKVDSAPDVEAAAAGLEKAKGVLRSKVGAGTGVRFTPTLTFVADTVPDTARHMEELLARAKAADDEVAKARENAQPAGDADPYKEPRVASDEDEASPDVREAD.

Basic and acidic residues-rich tracts occupy residues 118 to 128 (AADDEVAKARE) and 137 to 146 (DPYKEPRVAS). The segment at 118–159 (AADDEVAKARENAQPAGDADPYKEPRVASDEDEASPDVREAD) is disordered.

Belongs to the RbfA family. In terms of assembly, monomer. Binds 30S ribosomal subunits, but not 50S ribosomal subunits or 70S ribosomes.

The protein localises to the cytoplasm. Its function is as follows. One of several proteins that assist in the late maturation steps of the functional core of the 30S ribosomal subunit. Associates with free 30S ribosomal subunits (but not with 30S subunits that are part of 70S ribosomes or polysomes). Required for efficient processing of 16S rRNA. May interact with the 5'-terminal helix region of 16S rRNA. This is Ribosome-binding factor A from Rhodococcus erythropolis (strain PR4 / NBRC 100887).